We begin with the raw amino-acid sequence, 178 residues long: Extracellular fatty acid-binding protein (178 aa).

Residues 1-20 (MRTLALSLGLALLCLLHAKA) form the signal peptide. Threonine 43 provides a ligand contact to enterobactin. 1-tetradecanoyl-sn-glycerol 3-phosphate-binding residues include tyrosine 72 and lysine 104. A disulfide bridge links cysteine 80 with cysteine 173. Enterobactin-binding residues include lysine 104, arginine 123, and arginine 134. Residue 134–136 (RLY) participates in 1-tetradecanoyl-sn-glycerol 3-phosphate binding.

The protein belongs to the calycin superfamily. Lipocalin family. In terms of assembly, monomer.

It localises to the secreted. Siderocalin-like lipocalin tightly binding a variety of bacterial ferric siderophores, also binds long-chain unsaturated fatty acids such as linoleic acid, oleic acid, arachidonic acid and, with a lower affinity, long chain saturated fatty acids such as steraic acid. May act as an antibacterial factor, through dual ligand specificity, both as a siderophore-sequestrating molecule and a lysophosphatidic acid (LPA) sensor. This chain is Extracellular fatty acid-binding protein, found in Coturnix japonica (Japanese quail).